The chain runs to 364 residues: Caveolae-associated protein 4 (364 aa).

Positions 1 to 24 (MEHNGSASNADKIHQNRLSSVTED) are disordered. Positions 44–77 (VDSVQASQKRIEERHREMENAIKSVQIDLLKLSQ) form a coiled coil. 2 positions are modified to phosphoserine: S172 and S173. Residues 202–226 (FSKENMQKTRQNLDKKVNRIRTRIV) adopt a coiled-coil conformation. The segment covering 231–256 (RERLRQSGERLRQSGERLRQSGERFK) has biased composition (basic and acidic residues). Disordered regions lie at residues 231–283 (RERL…RTVA) and 311–339 (SDEL…TPEP). Y326 is subject to Phosphotyrosine. T336 carries the post-translational modification Phosphothreonine. A Phosphoserine modification is found at S355.

This sequence belongs to the CAVIN family. As to quaternary structure, component of the CAVIN complex composed of CAVIN1, CAVIN2, CAVIN3 and CAVIN4. Interacts with CAVIN1, ADRA1A and ADRA1B. Interacts with CAVIN2; this augments the transactivation of NPPA. Interacts with CAV3. Interacts with MAPK1 and MAPK3.

The protein localises to the cytoplasm. The protein resides in the myofibril. It is found in the sarcomere. Its subcellular location is the cytosol. It localises to the cell membrane. The protein localises to the sarcolemma. The protein resides in the membrane. It is found in the caveola. Its function is as follows. Modulates the morphology of formed caveolae in cardiomyocytes, but is not required for caveolar formation. Facilitates the recruitment of MAPK1/3 to caveolae within cardiomyocytes and regulates alpha-1 adrenergic receptor-induced hypertrophic responses in cardiomyocytes through MAPK1/3 activation. Contributes to proper membrane localization and stabilization of caveolin-3 (CAV3) in cardiomyocytes. Induces RHOA activation and activates NPPA transcription and myofibrillar organization through the Rho/ROCK signaling pathway. The protein is Caveolae-associated protein 4 of Homo sapiens (Human).